A 492-amino-acid polypeptide reads, in one-letter code: MKYKDLRDFIAMLEQQGKLKRVAHPVSPHLEMTEIADRVLRAEGPALLFENPVKPDGTRYDYPVLANLFGTPERVAMGMGADSVSKLREIGQTLAYLKEPEPPKGIKDAFSKLPLLKDIWSMAPNVVKNAPCQEIVWEGEDVDLYQLPIQHCWPEDVAPLVTWGLTVTRGPHKKRQNLGIYRQQLIGKNKLVMRWLSHRGGALDYQEFRKLNPDTPYPVAVVLGCDPSTILGAVTPVPDTLSEYQFAGLLRGSRTELVKCIGSDLQVPARAEIVLEGVIHPNETALEGPYGDHTGYYNEQGHFPVFTVERITMRENPIYHSTYTGKPPDEPAVLGVALNEVFVPLLQKQFSEITDFYLPPEGCSYRMAVVSMKKQYAGHAKRVMTGCWSFLRQFMYTKFIIVVDDDVNVRDWKEVIWAVTTRMDPVRDTVLVENTPIDYLDFASPVSGLGGKMGLDATSKWPGETDREWGRVIKKDPAVTVKIDGIWGKLGL.

A Mn(2+)-binding site is contributed by Asn177. Residues 180 to 182 (IYR), 194 to 196 (RWL), and 199 to 200 (RG) each bind prenylated FMN. Glu243 contributes to the Mn(2+) binding site. Residue Asp292 is the Proton donor of the active site.

It belongs to the UbiD family. In terms of assembly, homohexamer. The cofactor is prenylated FMN. It depends on Mn(2+) as a cofactor.

Its subcellular location is the cell membrane. It carries out the reaction a 4-hydroxy-3-(all-trans-polyprenyl)benzoate + H(+) = a 2-(all-trans-polyprenyl)phenol + CO2. It participates in cofactor biosynthesis; ubiquinone biosynthesis. Catalyzes the decarboxylation of 3-octaprenyl-4-hydroxy benzoate to 2-octaprenylphenol, an intermediate step in ubiquinone biosynthesis. This Neisseria gonorrhoeae (strain ATCC 700825 / FA 1090) protein is 3-octaprenyl-4-hydroxybenzoate carboxy-lyase.